Consider the following 502-residue polypeptide: ATP synthase subunit alpha (502 aa).

The segment at V115–G135 is disordered. G169–T176 contacts ATP.

This sequence belongs to the ATPase alpha/beta chains family. As to quaternary structure, F-type ATPases have 2 components, CF(1) - the catalytic core - and CF(0) - the membrane proton channel. CF(1) has five subunits: alpha(3), beta(3), gamma(1), delta(1), epsilon(1). CF(0) has three main subunits: a(1), b(2) and c(9-12). The alpha and beta chains form an alternating ring which encloses part of the gamma chain. CF(1) is attached to CF(0) by a central stalk formed by the gamma and epsilon chains, while a peripheral stalk is formed by the delta and b chains.

Its subcellular location is the cell membrane. It carries out the reaction ATP + H2O + 4 H(+)(in) = ADP + phosphate + 5 H(+)(out). Produces ATP from ADP in the presence of a proton gradient across the membrane. The alpha chain is a regulatory subunit. The polypeptide is ATP synthase subunit alpha (Bacillus cereus (strain B4264)).